The sequence spans 910 residues: MSLPLTEEQRKKIEENRQKALARRAEKLWAEQPQSTASGSSAARPSQCKQNSLLNLPAEPSKPEGHATISKGQNLNNSLPAAQRPHSSPCFQPSTAEEAKGLWKSEGKMSAACPNPSPPEVSNQQLLGSKSSEGHPQATQDTAASCPRPFPRDPKLEAKAGRPSTSGQSISDTFYALGEKTPKTDGRPAKALQTSPQKASCLRGMCLRTGDRFRVKIGYNKELIEVFKSLPSRRYDSFTKTWDFSMSDYRALMKAVERLSTVSLQPLEEVDGTGGQTSLPSAPSLTFVTGRCMLISRARFEVDIGYSEVVIALFKQMESRNYDPKTRKWNFLLEEHNKLIARSRELKQVQLDPLPKTLTLAFASQLEKTSLQSKADVPEADLSGVDAKLVSNLMPFQREGVSFAISKRGRLLLADDMGLGKTIQAICIAAFYRKEWPLLVVVPSSVRFTWEQAFLRWLPSLSPEDINVVVTGKGRLTAGLVNIVSFDLLSKLEKQLKTPFKVVIIDESHFLKNIKTARCRAAVPILKVAKRVILLSGTPAMSRPAELYTQIIAVKPTFFPQFHAFGLRYCDAKRLPWGWDYSGSSNLGELKLLLEEAVMLRRLKSDVLSQLPAKQRKMVVVNPGRISTRAKAALDAAAKEMTKDKTKQQQKEALLVFFNRTAEAKIPCVIEYILDLLESGREKFLVFAHHKVLLDAIAKELERKNVQHIRIDGSTPSADREDLCQQFQLSKGHTVAVLSITAANMGLTFSSADLVVFAELFWNPGVLIQAEDRVHRIGQTNSVGIHYLVAKGTADDYLWPLIQEKIKVLGEAGLSETNFSEMTEATDYLYKDPKQKTIYSLFQQSFEDDGNDMEFLEAAESFELGSTSGTSGNSSQELGDITDENALADSPPKKRRFEFFDNWDSFTSPF.

The segment at 1–170 (MSLPLTEEQR…GRPSTSGQSI (170 aa)) is disordered. Ser-2 carries the N-acetylserine modification. Mediates interaction with RPA2 stretches follow at residues 2-30 (SLPLTEEQRKKIEENRQKALARRAEKLWA) and 5-30 (LTEEQRKKIEENRQKALARRAEKLWA). Positions 3–28 (LPLTEEQRKKIEENRQKALARRAEKL) form a coiled coil. The segment covering 7-29 (EEQRKKIEENRQKALARRAEKLW) has biased composition (basic and acidic residues). Composition is skewed to polar residues over residues 32 to 54 (QPQSTASGSSAARPSQCKQNSLL) and 70 to 95 (SKGQNLNNSLPAAQRPHSSPCFQPST). Over residues 97 to 107 (EEAKGLWKSEG) the composition is skewed to basic and acidic residues. Ser-117 is subject to Phosphoserine. Positions 120-131 (EVSNQQLLGSKS) are enriched in polar residues. Residues 150 to 160 (FPRDPKLEAKA) show a composition bias toward basic and acidic residues. Ser-164 is modified (phosphoserine). HARP domains follow at residues 198 to 268 (KASC…QPLE) and 284 to 355 (SLTF…DPLP). A Helicase ATP-binding domain is found at 402–557 (SFAISKRGRL…YTQIIAVKPT (156 aa)). Position 415–422 (415–422 (DDMGLGKT)) interacts with ATP. A DESH box motif is present at residues 506-509 (DESH). The Nuclear localization signal motif lies at 601–618 (RRLKSDVLSQLPAKQRKM). Residues 672–825 (YILDLLESGR…ETNFSEMTEA (154 aa)) enclose the Helicase C-terminal domain. The segment covering 865 to 875 (GSTSGTSGNSS) has biased composition (low complexity). The segment at 865 to 890 (GSTSGTSGNSSQELGDITDENALADS) is disordered.

The protein belongs to the SNF2/RAD54 helicase family. SMARCAL1 subfamily. In terms of assembly, interacts with RPA2; the interaction is direct and mediates the recruitment by the RPA complex of SMARCAL1 to sites of DNA damage. In terms of processing, DNA damage-regulated phosphorylation by kinases that may include ATM, ATR and PRKDC.

It is found in the nucleus. The enzyme catalyses ATP + H2O = ADP + phosphate + H(+). ATP-dependent annealing helicase that binds selectively to fork DNA relative to ssDNA or dsDNA and catalyzes the rewinding of the stably unwound DNA. Rewinds single-stranded DNA bubbles that are stably bound by replication protein A (RPA). Acts throughout the genome to reanneal stably unwound DNA, performing the opposite reaction of many enzymes, such as helicases and polymerases, that unwind DNA. May play an important role in DNA damage response by acting at stalled replication forks. The protein is SWI/SNF-related matrix-associated actin-dependent regulator of chromatin subfamily A-like protein 1 (Smarcal1) of Rattus norvegicus (Rat).